Consider the following 140-residue polypeptide: Putative pre-16S rRNA nuclease (140 aa).

Belongs to the YqgF nuclease family.

It is found in the cytoplasm. Its function is as follows. Could be a nuclease involved in processing of the 5'-end of pre-16S rRNA. The sequence is that of Putative pre-16S rRNA nuclease from Vibrio cholerae serotype O1 (strain ATCC 39541 / Classical Ogawa 395 / O395).